Here is a 994-residue protein sequence, read N- to C-terminus: MVVTKLATQRPKLPSVGRLGLVDPPAGERLAQLGWDRHEDQAHVDLLWSLSRAPDADAALRALIRLSENPDTGWDELNAALLRERSLRGRLFSVLGSSLALGDHLVAHPQSWKLLRGKVTLPSHDQLQRSFVECVEESEGMPGSLVHRLRTQYRDYVLMLAALDLAATVEDEPVLPFTVVAARLADAADAALAAALRVAEASVCGEHPPPRLAVIAMGKCGARELNYVSDVDVIFVAERSDPRNARVASEMMRVASAAFFEVDAALRPEGRNGELVRTLESHIAYYQRWAKTWEFQALLKARPVVGDAELGERYLTALMPMVWRACEREDFVVEVQAMRRRVEQLVPADVRGRELKLGSGGLRDVEFAVQLLQLVHARSDESLRVASTVDALAALGEGGYIGREDAANMTASYEFLRLLEHRLQLQRLKRTHLLPDPEDEEAVRWLARAAHIRPDGRNDAAGVLREELKKQNVRVSKLHTKLFYQPLLESIGPTGLEIAHGMTLEAAGRRLAALGYEGPQTALKHMSALVNQSGRRGRVQSVLLPRLLDWMSYAPDPDGGLLAYRRLSEALATESWYLATLRDKPAVAKRLMHVLGTSAYVPDLLMRAPRVIQQYEDGPAGPKLLETEPAAVARALIASASRYPDPERAIAGARTLRRRELARIGSADLLGLLEVTEVCRALTSVWVAVLQAALDVMIRASLPDDDRAPAAIAVIGMGRLGGAELGYGSDADVMFVCEPATGVDDARAVKWSTSIAERVRALLGTPSVDPPLELDANLRPEGRNGPLVRTLGSYAAYYEQWAQPWEIQALLRAHAVAGDAELGQRFLRMVDKTRYPPDGVSADSVREIRRIKARIESERLPRGADPNTHTKLGRGGLADIEWTVQLLQLQHAHQVPALHNTSTLQSLDVIAAADLVPAADVELLRQAWLTATRARNALVLVRGKPTDQLPGPGRQLNAVAVAAGWRNDDGGEFLDNYLRVTRRAKAVVRKVFGS.

The tract at residues 1–487 is adenylyl removase; sequence MVVTKLATQR…LHTKLFYQPL (487 aa). Positions 492–994 are adenylyl transferase; sequence GPTGLEIAHG…KAVVRKVFGS (503 aa).

The protein belongs to the GlnE family. Requires Mg(2+) as cofactor.

It carries out the reaction [glutamine synthetase]-O(4)-(5'-adenylyl)-L-tyrosine + phosphate = [glutamine synthetase]-L-tyrosine + ADP. It catalyses the reaction [glutamine synthetase]-L-tyrosine + ATP = [glutamine synthetase]-O(4)-(5'-adenylyl)-L-tyrosine + diphosphate. Functionally, involved in the regulation of glutamine synthetase GlnA, a key enzyme in the process to assimilate ammonia. When cellular nitrogen levels are high, the C-terminal adenylyl transferase (AT) inactivates GlnA by covalent transfer of an adenylyl group from ATP to specific tyrosine residue of GlnA, thus reducing its activity. Conversely, when nitrogen levels are low, the N-terminal adenylyl removase (AR) activates GlnA by removing the adenylyl group by phosphorolysis, increasing its activity. The regulatory region of GlnE binds the signal transduction protein PII (GlnB) which indicates the nitrogen status of the cell. The chain is Bifunctional glutamine synthetase adenylyltransferase/adenylyl-removing enzyme from Mycobacterium bovis (strain ATCC BAA-935 / AF2122/97).